Consider the following 497-residue polypeptide: Trichoplein keratin filament-binding protein (497 aa).

3 coiled-coil regions span residues 67–140 (HCEK…LLYE), 166–271 (ATQK…ELGR), and 327–479 (MKQV…AKTM). The tract at residues 72–457 (KEEKRKILEL…WEAARQEEEE (386 aa)) is interaction with keratin proteins. A disordered region spans residues 167 to 188 (TQKEEKKQQEATEKQENKRLEN). A compositionally biased stretch (basic and acidic residues) spans 168–188 (QKEEKKQQEATEKQENKRLEN). The segment at 258–424 (RQMAALRRKT…KQLAQRAKEE (167 aa)) is trichohyalin/plectin homology domain. Residues 441–497 (AERQGQEWEAARQEEEEEEEARQAEEHSNALLQQEAKTMAEKGYQPKLHGHLRIAWD) are disordered. Positions 444–453 (QGQEWEAARQ) are enriched in basic and acidic residues. Over residues 488-497 (LHGHLRIAWD) the composition is skewed to basic residues.

Belongs to the TCHP family. In terms of assembly, interacts specifically with keratin proteins including, KRT5, KRT6A, KRT8, KRT14, KRT16 and KRT18. Interacts with KCTD17. Post-translationally, ubiquitinated. Ubiquitination by the BCR(KCTD17) E3 ubiquitin ligase complex results in proteasomal degradation, and induces ciliogenesis. Expressed in all tissues examined, including brain, liver, small intestine, large intestine, lung and heart. Found concentrated in tubular structures within hepatocytes, and in the apical cortical region and desmosomes of the apical junctional domain in enterocytes of the small intestine. In the hair follicle, localized at the outer root sheath. Also expressed in blood vessels (at protein level).

The protein resides in the cytoplasm. It is found in the cytoskeleton. The protein localises to the cell membrane. Its subcellular location is the mitochondrion. It localises to the microtubule organizing center. The protein resides in the centrosome. Functionally, tumor suppressor which has the ability to inhibit cell growth and be pro-apoptotic during cell stress. May act as a 'capping' or 'branching' protein for keratin filaments in the cell periphery. May regulate K8/K18 filament and desmosome organization mainly at the apical or peripheral regions of simple epithelial cells. Is a negative regulator of ciliogenesis. The polypeptide is Trichoplein keratin filament-binding protein (Mus musculus (Mouse)).